A 149-amino-acid polypeptide reads, in one-letter code: Large ribosomal subunit protein bL9 (149 aa).

This sequence belongs to the bacterial ribosomal protein bL9 family.

Its function is as follows. Binds to the 23S rRNA. This chain is Large ribosomal subunit protein bL9, found in Leptospira borgpetersenii serovar Hardjo-bovis (strain JB197).